We begin with the raw amino-acid sequence, 135 residues long: Nucleoside diphosphate kinase (135 aa).

Lysine 9, tyrosine 57, arginine 85, threonine 91, arginine 102, and asparagine 112 together coordinate ATP. The active-site Pros-phosphohistidine intermediate is the histidine 115.

It belongs to the NDK family. As to quaternary structure, homotetramer. Requires Mg(2+) as cofactor.

It is found in the cytoplasm. The catalysed reaction is a 2'-deoxyribonucleoside 5'-diphosphate + ATP = a 2'-deoxyribonucleoside 5'-triphosphate + ADP. It carries out the reaction a ribonucleoside 5'-diphosphate + ATP = a ribonucleoside 5'-triphosphate + ADP. Major role in the synthesis of nucleoside triphosphates other than ATP. The ATP gamma phosphate is transferred to the NDP beta phosphate via a ping-pong mechanism, using a phosphorylated active-site intermediate. This Thermoanaerobacter pseudethanolicus (strain ATCC 33223 / 39E) (Clostridium thermohydrosulfuricum) protein is Nucleoside diphosphate kinase.